Reading from the N-terminus, the 439-residue chain is UPF0489 protein C5orf22 homolog (439 aa).

The interval 163 to 219 is disordered; sequence TTKLENGQSGAKIPKAAQTQDDMQSKADTPCTSSSQPPDGSAASGNISETAKKKADD. Residues 179 to 211 are compositionally biased toward polar residues; that stretch reads AQTQDDMQSKADTPCTSSSQPPDGSAASGNISE.

The protein belongs to the UPF0489 family.

The protein is UPF0489 protein C5orf22 homolog of Danio rerio (Zebrafish).